The following is a 401-amino-acid chain: Inactive leucine-rich repeat receptor-like protein kinase CORYNE (401 aa).

Residues 1-33 (MKQRRRRNGCSSSNTISLLLLFFLVFFSRTSTS) form the signal peptide. The Extracellular segment spans residues 34–62 (TSCRRRTVKHLSTTSTSSTPLESRITSKV). The helical transmembrane segment at 63 to 83 (IVISIVSGILTGLVSALVLAF) threads the bilayer. The Cytoplasmic portion of the chain corresponds to 84–401 (LVRSIVKFMK…VHMLTQLHSF (318 aa)). One can recognise a Protein kinase domain in the interval 118–401 (SNGIQLLGSD…VHMLTQLHSF (284 aa)). ATP-binding positions include 124–132 (LGSDLNGKY) and K146.

Belongs to the protein kinase superfamily. Ser/Thr protein kinase family. Self-interacts. Parts of a tetrameric complex made of two CLV2/CRN heterodimers that can interact with CLV3 and CLE peptides. CLV2/CRN heterodimer interacts with CLV1 homodimers. Interacts with CLV1 and CLV2. CLV2/CRN heterodimer can interact with BAM3. Present in roots, stems, leaves, inflorescence, flowers and siliques. Mostly expressed in shoot tips and, to a lesser extent, in young organs and roots. Also expressed in the inner tissues of the proximal root meristem. Expressed in the vascular cylinder of root tips, mostly in phloem poles.

The protein resides in the cell membrane. It localises to the endoplasmic reticulum membrane. Involved in the perception of CLV3 and CLV3-like (CLE) peptides, that act as extracellular signals regulating meristem maintenance. Modulates root, shoot and flower apical meristem maintenance and floral organ development regulation, probably via CLAVATA (CLV)-like pathways involving at least CLV3 and CLE19. In complex with CLV2, perceives secreted CLV3-like effector proteins from plant-parasitic cyst nematodes as ligand mimics of the plant CLE signaling pathway. This recognition is required for proper feeding structure (syncytium) development and ultimately successful nematode infection. CLE14 perception by CLV2/CRN complex triggers root meristem differentiation. Required for the sensing of the root CLE peptides (e.g. CLE8, CLE9/CLE10, CLE11, CLE13, CLE14, CLE16, CLE17, CLE18, CLE20, CLE21, CLE25, CLE26, CLE40, CLE41/CLE44 and CLE45), which also involves CLV2 and leads to root growth regulation, mostly in the phloem and protophloem. Promotes the accumulation of BAM3, especially at later stages of protophloem development. This chain is Inactive leucine-rich repeat receptor-like protein kinase CORYNE, found in Arabidopsis thaliana (Mouse-ear cress).